The sequence spans 320 residues: MKRGGYRQINKALNISAFENYLDIQHDHLPKLNDVEQLSPRVLRVLGQNAGKFTLQGTNTYIVGTGRERLIIDTGQGIPEWTDLISSTLRDSAITLSHVLLTHWHGDHTGGVPDLIRLYPHLSNSIFKHSSSNGQQPIIDGQVFHVEGATVRAMHSPGHSHDHMCFILEEENAMFTGDNVLGHGTSAVELLGIWMASLRLMQSSGCRVGYPAHGAVIADLLAKIAGELDQKARREARVVRTLARNKREEQSKGRSKGSMTVQELVTAMHGKGLDDQVRTMALEPFINEVLGKLAGDGCVAFEVRRGEKRWFIVNDVTSSP.

Zn(2+) is bound by residues His103, His105, Asp107, and His108. Residue Asp107 is the Proton donor/acceptor of the active site.

It belongs to the metallo-beta-lactamase superfamily. It depends on Zn(2+) as a cofactor.

It catalyses the reaction atrochrysone carboxyl-[ACP] + H2O = atrochrysone carboxylate + holo-[ACP] + H(+). Its pathway is secondary metabolite biosynthesis. In terms of biological role, atrochrysone carboxyl ACP thioesterase; part of the gene cluster that mediates the biosynthesis of geodin, an intermediate in the biosynthesis of other natural products. The pathway begins with the synthesis of atrochrysone thioester by the polyketide synthase (PKS) gedC. The atrochrysone carboxyl ACP thioesterase gedB then breaks the thioester bond and releases the atrochrysone carboxylic acid from gedC. The atrochrysone carboxylic acid is then converted to atrochrysone which is further transformed into emodinanthrone. The next step is performed by the emodinanthrone oxygenase gedH that catalyzes the oxidation of emodinanthrone to emodin. Emodin O-methyltransferase encoded probably by gedA then catalyzes methylation of the 8-hydroxy group of emodin to form questin. Ring cleavage of questin by questin oxidase gedK leads to desmethylsulochrin via several intermediates including questin epoxide. Another methylation step probably catalyzed by methyltransferase gedG leads to the formation of sulochrin which is further converted to dihydrogeodin by the sulochrin halogenase gedL. Finally, the dihydrogeodin oxidase gedJ catalyzes the stereospecific phenol oxidative coupling reaction converting dihydrogeodin to geodin. The chain is Atrochrysone carboxyl ACP thioesterase from Aspergillus terreus (strain NIH 2624 / FGSC A1156).